The sequence spans 512 residues: MKLKPIEVAEILQKEIANINCLSEIKEVGQVISVGDGIAKIYGLANVKSGEVVEFKSGVKGLVLNLENDSVSAVIMGDDNQVQQGDNVKRTKEVLEVPVGKALLGRVVDALGNPIDGKGDIASKEYRHIAMKAPGIIERTSVSEPVQTGIKAIDSLIPIGRGQRELIIGDRQTGKTAIAVDTIINQKQAHSLTNESDKIYCIYVAIGQKRSSVAQIVKKLEDAGAMDYTIVVSATASEAASLQFIAPYSACSMGEYFRDNGMHALIIYDDLSKHAVAYRQISLLLRRPPGREAYPGDVFYLHSRLLERAAKMSEEKGNGSLTALPIIETQAGDVSAYIPTNVISITDGQIFLESELFYKGVRPAVNVGISVSRVGSAAQIKAMKQVAGSVKLELAQFRELESFSQFGSDLDPATKAQIDHGKRLVEILKQAQYRPLPVEEQIISLYVGTKKYLNDVPLQKVKEFEDKMLTEIRLNKKDILESIKNEQRITEETEQKLKAFLENFVKAYCVMP.

169-176 (GDRQTGKT) contributes to the ATP binding site.

This sequence belongs to the ATPase alpha/beta chains family. As to quaternary structure, F-type ATPases have 2 components, CF(1) - the catalytic core - and CF(0) - the membrane proton channel. CF(1) has five subunits: alpha(3), beta(3), gamma(1), delta(1), epsilon(1). CF(0) has three main subunits: a(1), b(2) and c(9-12). The alpha and beta chains form an alternating ring which encloses part of the gamma chain. CF(1) is attached to CF(0) by a central stalk formed by the gamma and epsilon chains, while a peripheral stalk is formed by the delta and b chains.

The protein localises to the cell inner membrane. The enzyme catalyses ATP + H2O + 4 H(+)(in) = ADP + phosphate + 5 H(+)(out). Its function is as follows. Produces ATP from ADP in the presence of a proton gradient across the membrane. The alpha chain is a regulatory subunit. In Rickettsia akari (strain Hartford), this protein is ATP synthase subunit alpha.